A 631-amino-acid chain; its full sequence is Probable basic-leucine zipper transcription factor F (631 aa).

Residues 35-62 (KKNANVFNNFQQQQQQIQQQNKQSNGLI) are a coiled coil. Disordered stretches follow at residues 46–117 (QQQQ…HNNI), 154–207 (LNNS…NNQF), and 264–406 (MLNV…ERHQ). 2 stretches are compositionally biased toward low complexity: residues 155–206 (NNSY…NNNQ) and 271–360 (NNAN…GSNN). Positions 328–366 (NNNNNNSNNISTQINNLNNNINNQNNQLNGSNNGKKKEE) form a coiled coil. The bZIP domain occupies 405–468 (HQKRQRRLVK…KLIREQLLYL (64 aa)). The basic motif stretch occupies residues 407–427 (KRQRRLVKNREAAQLFRQRQK). The tract at residues 433-440 (LEKKVSDL) is leucine-zipper. The segment at 546–631 (QGNLLGTPIP…PPQQSTPNQR (86 aa)) is disordered. 2 stretches are compositionally biased toward low complexity: residues 563–609 (SNSG…PNSS) and 618–631 (PQNTPPQQSTPNQR).

This sequence belongs to the bZIP family.

Its subcellular location is the nucleus. Probable transcriptional regulator. In Dictyostelium discoideum (Social amoeba), this protein is Probable basic-leucine zipper transcription factor F (bzpF).